The primary structure comprises 246 residues: 2-C-methyl-D-erythritol 4-phosphate cytidylyltransferase (246 aa).

Belongs to the IspD/TarI cytidylyltransferase family. IspD subfamily.

The catalysed reaction is 2-C-methyl-D-erythritol 4-phosphate + CTP + H(+) = 4-CDP-2-C-methyl-D-erythritol + diphosphate. It participates in isoprenoid biosynthesis; isopentenyl diphosphate biosynthesis via DXP pathway; isopentenyl diphosphate from 1-deoxy-D-xylulose 5-phosphate: step 2/6. Functionally, catalyzes the formation of 4-diphosphocytidyl-2-C-methyl-D-erythritol from CTP and 2-C-methyl-D-erythritol 4-phosphate (MEP). The protein is 2-C-methyl-D-erythritol 4-phosphate cytidylyltransferase of Chlorobaculum parvum (strain DSM 263 / NCIMB 8327) (Chlorobium vibrioforme subsp. thiosulfatophilum).